The sequence spans 246 residues: Small ribosomal subunit protein uS2 (246 aa).

The protein belongs to the universal ribosomal protein uS2 family.

This is Small ribosomal subunit protein uS2 from Burkholderia thailandensis (strain ATCC 700388 / DSM 13276 / CCUG 48851 / CIP 106301 / E264).